The sequence spans 565 residues: MRRSLSDLIDQGRGKAPADLVLKNGRIFDLVTGELVQTDVAICGDRIVGTFGTYEGRREIDCRGRILVPGFIDTHLHVESSLVTPFEFDRCVTPRGITTAICDPHEIANVCGLEGIRYFLEAAEHLVMDLRVQLSSCVPSTHMETAGATLEAADLVPLMDHPRVIGLAEFMNFPGVLAKDAGCLAKLEAFRGRHIDGHAPLLRGKDLNGYIAAGIRTEHEATTAEEALEKLRKGMRVLIREGSVSRDLEALVPLLTERHSPYLCLCTDDRNPLDIAEHGHIDHMIRTAIRLGAPPLAVYRAASLSAAEAFGLKDRGLIAPGKRADVVALDSLEGCHAGLVVAGGVVVDAGAFAARGTVEPVARASVRVAPVEAAAFRCPGNRAETPVIGILPGKIITEHLTDAIEPVDGDKRPDPSRDLARIAVIERHGRNGGRAVGFVRGFGMRRGAIASTVCHDHHNLAVVGVDYADMALAANRLREIEGGFAVAAEGEILAELALPVGGLMSLRPFEEVRDALVALREAARGLGVTLEEPFLQLAFLALPVIPHLKITDRGIVDVDRFEILP.

The protein belongs to the metallo-dependent hydrolases superfamily. Adenine deaminase family. Mn(2+) is required as a cofactor.

It catalyses the reaction adenine + H2O + H(+) = hypoxanthine + NH4(+). This is Adenine deaminase from Cereibacter sphaeroides (strain ATCC 17025 / ATH 2.4.3) (Rhodobacter sphaeroides).